Reading from the N-terminus, the 165-residue chain is 3-isopropylmalate dehydratase small subunit (165 aa).

It belongs to the LeuD family. LeuD type 2 subfamily. In terms of assembly, heterodimer of LeuC and LeuD.

It catalyses the reaction (2R,3S)-3-isopropylmalate = (2S)-2-isopropylmalate. It participates in amino-acid biosynthesis; L-leucine biosynthesis; L-leucine from 3-methyl-2-oxobutanoate: step 2/4. In terms of biological role, catalyzes the isomerization between 2-isopropylmalate and 3-isopropylmalate, via the formation of 2-isopropylmaleate. This chain is 3-isopropylmalate dehydratase small subunit, found in Desulfovibrio desulfuricans (strain ATCC 27774 / DSM 6949 / MB).